The sequence spans 107 residues: UPF0145 protein LVIS_1527 (107 aa).

The protein belongs to the UPF0145 family.

In Levilactobacillus brevis (strain ATCC 367 / BCRC 12310 / CIP 105137 / JCM 1170 / LMG 11437 / NCIMB 947 / NCTC 947) (Lactobacillus brevis), this protein is UPF0145 protein LVIS_1527.